The chain runs to 521 residues: ATP synthase subunit beta (521 aa).

Low complexity-rich tracts occupy residues 1–21 and 28–42; these read MAKA…AAKA and PKTT…TKSG. The segment at 1–42 is disordered; it reads MAKAATPKTTAAAEAKPAAKAPAKKAAPKTTAAAKPAATKSG. Residue 199–206 participates in ATP binding; the sequence is GGAGVGKT.

The protein belongs to the ATPase alpha/beta chains family. F-type ATPases have 2 components, CF(1) - the catalytic core - and CF(0) - the membrane proton channel. CF(1) has five subunits: alpha(3), beta(3), gamma(1), delta(1), epsilon(1). CF(0) has three main subunits: a(1), b(2) and c(9-12). The alpha and beta chains form an alternating ring which encloses part of the gamma chain. CF(1) is attached to CF(0) by a central stalk formed by the gamma and epsilon chains, while a peripheral stalk is formed by the delta and b chains.

Its subcellular location is the cell inner membrane. The catalysed reaction is ATP + H2O + 4 H(+)(in) = ADP + phosphate + 5 H(+)(out). Its function is as follows. Produces ATP from ADP in the presence of a proton gradient across the membrane. The catalytic sites are hosted primarily by the beta subunits. The polypeptide is ATP synthase subunit beta (Brucella abortus (strain 2308)).